A 346-amino-acid chain; its full sequence is Biotin synthase (346 aa).

Residues 38 to 256 (QQVQVSTLLS…IAVARIMMPT (219 aa)) enclose the Radical SAM core domain. [4Fe-4S] cluster is bound by residues Cys-53, Cys-57, and Cys-60. The [2Fe-2S] cluster site is built by Cys-97, Cys-128, Cys-188, and Arg-260.

Belongs to the radical SAM superfamily. Biotin synthase family. In terms of assembly, homodimer. It depends on [4Fe-4S] cluster as a cofactor. Requires [2Fe-2S] cluster as cofactor.

The enzyme catalyses (4R,5S)-dethiobiotin + (sulfur carrier)-SH + 2 reduced [2Fe-2S]-[ferredoxin] + 2 S-adenosyl-L-methionine = (sulfur carrier)-H + biotin + 2 5'-deoxyadenosine + 2 L-methionine + 2 oxidized [2Fe-2S]-[ferredoxin]. Its pathway is cofactor biosynthesis; biotin biosynthesis; biotin from 7,8-diaminononanoate: step 2/2. Its function is as follows. Catalyzes the conversion of dethiobiotin (DTB) to biotin by the insertion of a sulfur atom into dethiobiotin via a radical-based mechanism. In Salmonella gallinarum (strain 287/91 / NCTC 13346), this protein is Biotin synthase.